A 580-amino-acid chain; its full sequence is Type II methyltransferase M.BanIII (580 aa).

This sequence belongs to the N(4)/N(6)-methyltransferase family.

It carries out the reaction a 2'-deoxyadenosine in DNA + S-adenosyl-L-methionine = an N(6)-methyl-2'-deoxyadenosine in DNA + S-adenosyl-L-homocysteine + H(+). Its function is as follows. A gamma subtype methylase, recognizes the double-stranded sequence 5'-ATCGAT-3', methylates A-5 on both strands, and protects the DNA from cleavage by the BanIII endonuclease. This is Type II methyltransferase M.BanIII (banIIIM) from Aneurinibacillus aneurinilyticus (Bacillus aneurinolyticus).